The primary structure comprises 35 residues: Toxin Ado1 (35 aa).

Intrachain disulfides connect C5/C20, C12/C25, and C19/C32.

The protein resides in the secreted. Binds reversibly and blocks P/Q-type voltage-gated calcium channels (Cav). The sequence is that of Toxin Ado1 from Agriosphodrus dohrni (Japanese assassin-bug).